The sequence spans 347 residues: Protein pelota homolog (347 aa).

This sequence belongs to the eukaryotic release factor 1 family. Pelota subfamily. Monomer. A divalent metal cation serves as cofactor.

The protein resides in the cytoplasm. May function in recognizing stalled ribosomes, interact with stem-loop structures in stalled mRNA molecules, and effect endonucleolytic cleavage of the mRNA. May play a role in the release non-functional ribosomes and degradation of damaged mRNAs. Has endoribonuclease activity. The polypeptide is Protein pelota homolog (Methanococcoides burtonii (strain DSM 6242 / NBRC 107633 / OCM 468 / ACE-M)).